Reading from the N-terminus, the 478-residue chain is Cytochrome c-552 (478 aa).

A signal peptide spans 1-26 (MTRIKINARRIFSLLIPFFFFTSVHA). Position 94 (histidine 94) interacts with heme c. Residues cysteine 122, cysteine 125, and lysine 126 each contribute to the heme site. Heme c is bound by residues cysteine 160, cysteine 163, histidine 164, cysteine 209, cysteine 212, and histidine 213. Ca(2+)-binding residues include glutamate 215, tyrosine 216, lysine 261, and glutamine 263. A substrate-binding site is contributed by tyrosine 216. Histidine 264 lines the substrate pocket. Heme c-binding residues include histidine 275, cysteine 282, cysteine 285, histidine 286, histidine 301, cysteine 314, cysteine 317, histidine 318, and histidine 393.

It belongs to the cytochrome c-552 family. Ca(2+) is required as a cofactor. Requires heme c as cofactor.

It is found in the periplasm. The catalysed reaction is 6 Fe(III)-[cytochrome c] + NH4(+) + 2 H2O = 6 Fe(II)-[cytochrome c] + nitrite + 8 H(+). It participates in nitrogen metabolism; nitrate reduction (assimilation). Catalyzes the reduction of nitrite to ammonia, consuming six electrons in the process. The polypeptide is Cytochrome c-552 (Shigella flexneri).